Reading from the N-terminus, the 239-residue chain is MIALIVLPILAAVLQQSSGSVDFDSESPRKPEIQNKIVDLHNSLRRSVNPTASNMLKMEWYSEAAANAERWAYRCIESHSPRDSRVLEGIKCGENIYMSSVPMKWTEIIHIWHGENKNFKYGIGADPPNAVTGHYTQIVWYKSYRAGCAAAYCPSLEYSYFYVCQYCPAGNIRGKTATPYKSGPPCGDCPSACDNGLCTNPCPKKISTQLPRFGPQAGCQDKQMQSDCSATCFCQNKII.

An N-terminal signal peptide occupies residues Met1–Gly19. Residues Val38 to Tyr166 form the SCP domain. Disulfide bonds link Cys75–Cys153, Cys92–Cys167, Cys148–Cys164, Cys186–Cys193, Cys189–Cys198, Cys202–Cys234, and Cys219–Cys232. The ShKT domain occupies Cys198–Cys234.

The protein belongs to the CRISP family. Expressed by the venom gland.

The protein localises to the secreted. In terms of biological role, weakly blocks contraction of smooth muscle elicited by high potassium-induced depolarization, but does not block caffeine-stimulated contraction. May target voltage-gated calcium channels on smooth muscle. This Sistrurus catenatus edwardsii (Desert massasauga) protein is Cysteine-rich venom protein 2.